We begin with the raw amino-acid sequence, 307 residues long: Methionyl-tRNA formyltransferase (307 aa).

(6S)-5,6,7,8-tetrahydrofolate is bound at residue 108 to 111 (SLLP).

The protein belongs to the Fmt family.

The enzyme catalyses L-methionyl-tRNA(fMet) + (6R)-10-formyltetrahydrofolate = N-formyl-L-methionyl-tRNA(fMet) + (6S)-5,6,7,8-tetrahydrofolate + H(+). In terms of biological role, attaches a formyl group to the free amino group of methionyl-tRNA(fMet). The formyl group appears to play a dual role in the initiator identity of N-formylmethionyl-tRNA by promoting its recognition by IF2 and preventing the misappropriation of this tRNA by the elongation apparatus. This is Methionyl-tRNA formyltransferase from Xanthomonas oryzae pv. oryzae (strain MAFF 311018).